Here is a 226-residue protein sequence, read N- to C-terminus: Probable transcriptional regulator RABBIT EARS (226 aa).

The C2H2-type zinc-finger motif lies at 55–77; sequence YSCSFCGREFKSAQALGGHMNVH. A disordered region spans residues 80–102; the sequence is DRARLKQQSLSPSSTDQATPPEC. Positions 85–97 are enriched in polar residues; it reads KQQSLSPSSTDQA. Positions 212 to 216 match the EAR-like (transcriptional repression) motif; it reads LDLEL.

Strongly expressed in inflorescences and flowers, and weakly in siliques, seedlings and roots. In flowers, it is expressed in petal primordia and their precursor cells. Also expressed in the lateral root caps and the basal cells of lateral roots.

The protein resides in the nucleus. Probable transcriptional regulator essential for petal development. Required for the early development of the organ primordia of the second whorl. Acts downstream of AP1 and PTL. In Arabidopsis thaliana (Mouse-ear cress), this protein is Probable transcriptional regulator RABBIT EARS (RBE).